Reading from the N-terminus, the 497-residue chain is Probable malate:quinone oxidoreductase (497 aa).

Belongs to the MQO family. FAD is required as a cofactor.

The catalysed reaction is (S)-malate + a quinone = a quinol + oxaloacetate. Its pathway is carbohydrate metabolism; tricarboxylic acid cycle; oxaloacetate from (S)-malate (quinone route): step 1/1. This Rhodopseudomonas palustris (strain TIE-1) protein is Probable malate:quinone oxidoreductase.